Here is a 206-residue protein sequence, read N- to C-terminus: Small ribosomal subunit protein uS2 (206 aa).

Belongs to the universal ribosomal protein uS2 family.

The chain is Small ribosomal subunit protein uS2 from Methanothrix thermoacetophila (strain DSM 6194 / JCM 14653 / NBRC 101360 / PT) (Methanosaeta thermophila).